The chain runs to 92 residues: Acylphosphatase (92 aa).

Residues 5–92 (GVTIYVYGRV…EDIADFIVRH (88 aa)) form the Acylphosphatase-like domain. Active-site residues include R20 and N38.

Belongs to the acylphosphatase family.

The enzyme catalyses an acyl phosphate + H2O = a carboxylate + phosphate + H(+). The sequence is that of Acylphosphatase (acyP) from Photorhabdus laumondii subsp. laumondii (strain DSM 15139 / CIP 105565 / TT01) (Photorhabdus luminescens subsp. laumondii).